We begin with the raw amino-acid sequence, 227 residues long: Ribonuclease 3 (227 aa).

The 123-residue stretch at 6–128 (ASDYQQRIGY…VIAAIYLDAD (123 aa)) folds into the RNase III domain. Glu-41 serves as a coordination point for Mg(2+). Asp-45 is an active-site residue. Mg(2+) contacts are provided by Asp-114 and Glu-117. Glu-117 is a catalytic residue. Residues 155–225 (DPKTRLQEWL…ASHAIDQLDS (71 aa)) form the DRBM domain. Over residues 203–212 (GEGSSRRLAE) the composition is skewed to basic and acidic residues. The disordered stretch occupies residues 203-227 (GEGSSRRLAEQDAASHAIDQLDSNK).

This sequence belongs to the ribonuclease III family. Homodimer. It depends on Mg(2+) as a cofactor.

It is found in the cytoplasm. It catalyses the reaction Endonucleolytic cleavage to 5'-phosphomonoester.. Digests double-stranded RNA. Involved in the processing of primary rRNA transcript to yield the immediate precursors to the large and small rRNAs (23S and 16S). Processes some mRNAs, and tRNAs when they are encoded in the rRNA operon. Processes pre-crRNA and tracrRNA of type II CRISPR loci if present in the organism. The protein is Ribonuclease 3 of Xylella fastidiosa (strain 9a5c).